The primary structure comprises 204 residues: Glycerol-3-phosphate acyltransferase (204 aa).

A run of 5 helical transmembrane segments spans residues 8 to 28 (ILIFAYLLGSINSAIIVCYIF), 53 to 73 (VPAAITLIFDILKGLVPVVIA), 81 to 101 (FITACTALYAILGHIFPIFFG), 116 to 136 (FGFSWILGLIFVITWLCVAII), and 155 to 175 (VIFTSDLQVAAPFLIIAIIIL).

It belongs to the PlsY family. In terms of assembly, probably interacts with PlsX.

The protein resides in the cell inner membrane. It carries out the reaction an acyl phosphate + sn-glycerol 3-phosphate = a 1-acyl-sn-glycero-3-phosphate + phosphate. It functions in the pathway lipid metabolism; phospholipid metabolism. Its function is as follows. Catalyzes the transfer of an acyl group from acyl-phosphate (acyl-PO(4)) to glycerol-3-phosphate (G3P) to form lysophosphatidic acid (LPA). This enzyme utilizes acyl-phosphate as fatty acyl donor, but not acyl-CoA or acyl-ACP. The sequence is that of Glycerol-3-phosphate acyltransferase from Francisella tularensis subsp. novicida (strain U112).